Reading from the N-terminus, the 115-residue chain is NADH-ubiquinone oxidoreductase chain 3 (115 aa).

The next 3 helical transmembrane spans lie at 4–24 (FMAL…AFWL), 55–75 (FFLV…LLPL), and 87–107 (MMLT…YEWV).

The protein belongs to the complex I subunit 3 family. Core subunit of respiratory chain NADH dehydrogenase (Complex I) which is composed of 45 different subunits. Interacts with TMEM186. Interacts with TMEM242.

The protein resides in the mitochondrion inner membrane. The catalysed reaction is a ubiquinone + NADH + 5 H(+)(in) = a ubiquinol + NAD(+) + 4 H(+)(out). In terms of biological role, core subunit of the mitochondrial membrane respiratory chain NADH dehydrogenase (Complex I) which catalyzes electron transfer from NADH through the respiratory chain, using ubiquinone as an electron acceptor. Essential for the catalytic activity of complex I. The polypeptide is NADH-ubiquinone oxidoreductase chain 3 (Osgoodomys banderanus (Michoacan deer mouse)).